The primary structure comprises 201 residues: ADP-ribosylation factor-related protein 1 (201 aa).

Met-1 carries the post-translational modification N-acetylmethionine. Residues 24–31, 75–79, and 134–137 each bind GTP; these read GLDNAGKT, DLGGQ, and NKQD.

This sequence belongs to the small GTPase superfamily. Arf family. As to quaternary structure, interacts with SYS1.

It localises to the golgi apparatus. Its subcellular location is the trans-Golgi network. Its function is as follows. Trans-Golgi-associated GTPase that regulates protein sorting. Controls the targeting of ARL1 and its effector to the trans-Golgi. Required for the lipidation of chylomicrons in the intestine and required for VLDL lipidation in the liver. The chain is ADP-ribosylation factor-related protein 1 (ARFRP1) from Pongo abelii (Sumatran orangutan).